Here is a 1198-residue protein sequence, read N- to C-terminus: DNA polymerase II large subunit (1198 aa).

2 disordered regions span residues 281 to 332 and 534 to 553; these read YKTG…PQKK and HWAETDGAQQTRPPDGAAES. The span at 286 to 319 shows a compositional bias: acidic residues; that stretch reads DTDEADADSDDGTDEDAADDSDIDDSSAGDEEAD.

Belongs to the archaeal DNA polymerase II family. As to quaternary structure, heterodimer of a large subunit and a small subunit.

It catalyses the reaction DNA(n) + a 2'-deoxyribonucleoside 5'-triphosphate = DNA(n+1) + diphosphate. The catalysed reaction is Exonucleolytic cleavage in the 3'- to 5'-direction to yield nucleoside 5'-phosphates.. In terms of biological role, possesses two activities: a DNA synthesis (polymerase) and an exonucleolytic activity that degrades single-stranded DNA in the 3'- to 5'-direction. Has a template-primer preference which is characteristic of a replicative DNA polymerase. This chain is DNA polymerase II large subunit, found in Natronomonas pharaonis (strain ATCC 35678 / DSM 2160 / CIP 103997 / JCM 8858 / NBRC 14720 / NCIMB 2260 / Gabara) (Halobacterium pharaonis).